Consider the following 726-residue polypeptide: MQKKNLITAALPYVNNIPHLGNLVQVLSADAFARYSRMMGIETLYVCGTDEYGTATETKALIEKTTPEELCNKYHAIHKSIYEWFNIKFDIFGRTTNKYHKETVQDLFLKLDKNGYITEKENEQFFCQQDQMFLADRYVTGECPNCGNNTKGDQCENCSNLLVTNELLNPRCIICKNIPIIKKTKHLYIDLPKIKNELEHWIQQIDQNTNWNINAIKITNAFLRDGLKERTITRDLKWGIPVPKKEYENKVFYVWFDAPIGYISITKEIIKDWESWWKNNEDTNLIQFIGKDNILFHTIMFPSIELGSQENWTMLNKLASSEYLNYENLKFSKSAGTGIFGNDVITTEIPSDVWRFYIYYNRPEKADFQFMWDDFMERINSELIGNFSNLINRVLTFYKKFFGDKIDKIELNENFWQIVNIKYERTINFFKQIELKAALKEILDISRIGNKIFQDKEPWKTKNSTPQTTKELLLNLIYLIRDLSILISPFMPHTSDRIRSFFGKSYEISNKFLGTNLGLTTIQSTEVLFTKLEKQLIDSLKLKYSGRTNMQDEKNKNSINLFSEQICLKTVKIKTIDRNPDAEKLFILKLDDGTPEGKQIVSSIADHYTEEELIGKHIIIVDNLKPAKFRGIRSEGMLIATKDENKNFKIIIVEDFKDNPIPGERVILESDTGKELKSPTKISIDKFLQAQIVAENGELKINGINLILEHSKEKVLSKEIPNGKIY.

Positions 12–22 (PYVNNIPHLGN) match the 'HIGH' region motif. Positions 143, 146, 155, and 158 each coordinate Zn(2+). The short motif at 330 to 334 (KFSKS) is the 'KMSKS' region element. Lys-333 provides a ligand contact to ATP. The 106-residue stretch at 562–667 (FSEQICLKTV…DNPIPGERVI (106 aa)) folds into the tRNA-binding domain.

It belongs to the class-I aminoacyl-tRNA synthetase family. MetG type 1 subfamily. As to quaternary structure, homodimer. It depends on Zn(2+) as a cofactor.

It is found in the cytoplasm. It carries out the reaction tRNA(Met) + L-methionine + ATP = L-methionyl-tRNA(Met) + AMP + diphosphate. In terms of biological role, is required not only for elongation of protein synthesis but also for the initiation of all mRNA translation through initiator tRNA(fMet) aminoacylation. This Borrelia recurrentis (strain A1) protein is Methionine--tRNA ligase.